The primary structure comprises 3080 residues: Adhesion G-protein coupled receptor G4 (3080 aa).

An N-terminal signal peptide occupies residues 1 to 27 (MKEHIIYQKLYGLILMSSFIFLSDTLS). The Extracellular segment spans residues 28–2740 (LKGKKLDFFG…SRSTVDSVNE (2713 aa)). The region spanning 29 to 228 (KGKKLDFFGR…IPTVDRTLRC (200 aa)) is the Pentraxin (PTX) domain. 2 disulfide bridges follow: cysteine 58-cysteine 123 and cysteine 200-cysteine 228. Residue aspartate 202 participates in Mg(2+) binding. Residues asparagine 233, asparagine 487, asparagine 836, and asparagine 899 are each glycosylated (N-linked (GlcNAc...) asparagine). Polar residues predominate over residues 946-959 (SEGISAGSPTSGST). The interval 946 to 965 (SEGISAGSPTSGSTHIFGEP) is disordered. N-linked (GlcNAc...) asparagine glycosylation is present at asparagine 1020. Residues 1274 to 1348 (VTEMSPSKNS…ITPTLTSSNT (75 aa)) form a disordered region. 3 stretches are compositionally biased toward polar residues: residues 1277–1296 (MSPS…SLEM), 1305–1315 (TKISSHQTHSP), and 1324–1348 (SDGN…SSNT). N-linked (GlcNAc...) asparagine glycosylation occurs at asparagine 1519. The span at 2109–2139 (SRTTITANPRTVSHPSSFSRKTMSPSTTDHT) shows a compositional bias: polar residues. The interval 2109–2141 (SRTTITANPRTVSHPSSFSRKTMSPSTTDHTLS) is disordered. Asparagine 2361 and asparagine 2640 each carry an N-linked (GlcNAc...) asparagine glycan. Residues 2578-2734 (MAFSIHSYEE…GVLMDLSRST (157 aa)) form the GAIN-B domain. Cystine bridges form between cysteine 2685–cysteine 2716 and cysteine 2704–cysteine 2718. The tract at residues 2685–2734 (CAFWDFENNNGLGGWNSSGCKVKETNVNYTICQCDHLTHFGVLMDLSRST) is GPS. The interval 2723-2734 (HFGVLMDLSRST) is stachel. The chain crosses the membrane as a helical span at residues 2741 to 2766 (QILALITYTGCGISSIFLGVAVVTYI). Residues 2767 to 2777 (AFHKLRKDYPA) are Cytoplasmic-facing. A helical transmembrane segment spans residues 2778 to 2800 (KILINLCTALLMLNLVFLINSWL). Residues 2801–2806 (SSFQKV) lie on the Extracellular side of the membrane. A helical transmembrane segment spans residues 2807–2835 (GVCITAAVALHYFLLVSFTWMGLEAVHMY). Cysteine 2809 and cysteine 2886 form a disulfide bridge. At 2836-2849 (LALVKVFNIYIPNY) the chain is on the cytoplasmic side. A helical transmembrane segment spans residues 2850 to 2870 (ILKFCLVGWGIPAIMVAITVS). Residues 2871–2892 (VKKDLYGTLSPTTPFCWIKDDS) lie on the Extracellular side of the membrane. A helical membrane pass occupies residues 2893 to 2918 (IFYISVVAYFCLIFLMNLSMFCTVLV). Residues 2919 to 2937 (QLNSVKSQIQKTRRKMILH) are Cytoplasmic-facing. A helical transmembrane segment spans residues 2938–2961 (DLKGTMSLTFLLGLTWGFAFFAWG). Over 2962 to 2965 (PMRN) the chain is Extracellular. A helical transmembrane segment spans residues 2966–2989 (FFLYLFAIFNTLQGFFIFVFHCVM). Residues 2990 to 3080 (KESVREQWQI…FDKDPYCSSP (91 aa)) are Cytoplasmic-facing. Residues 3051–3065 (FKSLGSAQGTPSEIS) are compositionally biased toward polar residues. The disordered stretch occupies residues 3051–3080 (FKSLGSAQGTPSEISFPNDDFDKDPYCSSP).

Belongs to the G-protein coupled receptor 2 family. Adhesion G-protein coupled receptor (ADGR) subfamily. As to quaternary structure, homodimer; homodimerizes via its Pentraxin domain in a calcium-independent manner. Heterodimer of 2 chains generated by proteolytic processing; the large extracellular N-terminal fragment and the membrane-bound C-terminal fragment predominantly remain associated and non-covalently linked. Post-translationally, autoproteolytically processed at the GPS region of the GAIN-B domain; this cleavage modulates receptor activity. In terms of processing, N-glycosylated. Detected in fetal retina. Highly expressed in normal enterochromaffin cells and in neuroendocrine carcinoma. Detected in normal liver; highly expressed in primary liver carcinoma.

The protein resides in the membrane. With respect to regulation, forms a heterodimer of 2 chains generated by proteolytic processing that remain associated through non-covalent interactions mediated by the GAIN-B domain. In the inactivated receptor, the Stachel sequence (also named stalk) is embedded in the GAIN-B domain, where it adopts a beta-strand conformation. On activation, the Stachel moves into the 7 transmembrane region and adopts a twisted hook-shaped configuration that forms contacts within the receptor, leading to coupling of a G-alpha protein, which activates signaling. The cleaved GAIN-B and N-terminal domains can then dissociate from the rest of the receptor. In terms of biological role, orphan adhesion G-protein coupled receptor (aGPCR). Ligand binding causes a conformation change that triggers signaling via guanine nucleotide-binding proteins (G proteins) and modulates the activity of downstream effectors, such as adenylate cyclase. ADGRG4 is coupled to G(s) G proteins and mediates activation of adenylate cyclase activity. May be act as sensor of mechanical forces. This is Adhesion G-protein coupled receptor G4 from Homo sapiens (Human).